We begin with the raw amino-acid sequence, 1611 residues long: MPARTAPARVPALASRAFSLPDDVRRRLKDLERDSLTEKECVKEKLNLLHEFLRTEIKNQLCDLETKLHKEELSEEGYLAKVKSLLNKDLSLENGAHAFSREANGCLENGSQTSGEDCRVVMAEKGKPPKPVSRLYTPRRSKSDGETKSEVSSSPRITRKTTRQTTITSHFPRGPAKRKPEEEPEKVKSDDSVDEEKDQEEKRRRVTSRERVAGLLPAEEPGRVRPGTHMEEEGRDDKEEKRLRSQTKEPTPKHKAKEEPDRDVRPGGAQAEMNEGEDKDEKRHRSQPKDLASKRRPEEKEPERVKPQVSDEKDEDEKEEKRRRTTYRELTEKKMTRTKIAVVSKTNPPKCTECLQYLDDPELRYEQHPPDAVEEIQILTNERLSIFDANESGFESYEDLPQHKLTCFSVYCKRGHLCPIDTGLIEKDVELLFSGSAKPIYEDDPSPEGGINGKNFGPINEWWIAGFDGGEKALLGFSTSFAEYILMDPSPEYAPLFSVMQEKIYISKIVVEFLQSNPDSTYEDLINKIETTVPPCMLNLNRFTEDSLLRHAQFVVEQVESYDRAGDSDEQPIFLSPCMRDLIKLAGVTLGKRRAERRQTIRQPAKEKDKGPTKATTTKLVYQIFDTFFAEQIEKDDKEDKENAFKRRRCGVCEICQQPECGKCKACKDMVKFGGSGRSKQACQKRRCPNMAMKEADDDEEVDDNIPEMPSPKKMHQGKKKKQNKNRISWVGDAVKTDGKKSYYKKVCIDSETLEVGDCVSVIPDDSSKPLYLARVTALWEDSSNGQMFHAHWFCAGTDTVLGATSDPLELFLVDECEDMQLSYIHSKVQVIYKAPSENWAMEGGVDPEALMSEDDGKTYFYQLWYDQDYARFESPPKTQPTEDNKYKFCASCARLAEMRQKEIPRVVEQLQDLEGRVLYSLATKNGVQYRVGDGVYLPPEAFTFNIKLSSPVKRPRKEPVDEALYPEHYRKYSDYIKGSNLDAPEPYRIGRIKEIFCSKKSNGRPNETDIKIRVNKFYRPENTHKSTPASYHADINLLYWSDEEAVVDFKAVQGRCTVEYGEDLPQCLQDFSAGGPDRFYFLEAYNAKSKSFEDPPNHARSTGNKGKGKGKGKNRTKSQTCEPSELETEIKLPKLRTLDVFSGCGGLSEGFHQAGISETLWAIEMWDPAAQAFRLNNPGSTVFTEDCNVLLKLVMAGEVTNSRGQKLPQKGDVEMLCGGPPCQGFSGMNRFNSRTYSKFKNSLVVSFLSYCDYYRPRYFLLENVRNFVSFKRSMVLKLTLRCLVRMGYQCTFGVLQAGQYGVAQTRRRAIILAAAPGEPLPLFPEPLHVFAPRACQLSVVVDDKKFVSNITRLSSGPFRTITVRDTMSDLPEIRNGASALEISYNGEPQSWFQRQLRGSQYQPILRDHICKDMSALVAARMRHIPLAPGSDWRDLPNIEVRLSDGTLARKLRYNYHDKKNGCSSSGALRGVCSCVEGKPCEPAARQFNTLIPWCLPHTGNRHNHWAGLYGRLEWDGFFSTTVTNPEPMGKQGRVLHPEQHRVVSVRECARSQGFPDTYRLFGNILDKHRQVGNAVPPPLAKAIGLEIKRCMLAKARESASAKIKEEAAKD.

The segment at 1 to 120 is interaction with DMAP1; it reads MPARTAPARV…SQTSGEDCRV (120 aa). Residues 1–148 are interaction with DNMT3A; sequence MPARTAPARV…RRSKSDGETK (148 aa). Interaction with the PRC2/EED-EZH2 complex stretches follow at residues 1 to 334 and 306 to 603; these read MPAR…TEKK and KPQV…TIRQ. Phosphoserine is present on Ser-15. The region spanning 16–109 is the DMAP1-binding domain; that stretch reads RAFSLPDDVR…SREANGCLEN (94 aa). Residue Lys-70 is modified to N6,N6-dimethyllysine; by EHMT2. Residues 123–328 are disordered; the sequence is AEKGKPPKPV…EEKRRRTTYR (206 aa). A Phosphoserine modification is found at Ser-133. Thr-137 carries the post-translational modification Phosphothreonine. Ser-141 carries the phosphoserine modification. Lys-142 is modified (N6-methyllysine; by SETD7). Ser-143 is modified (phosphoserine; by PKB/AKT1). Residues 149-216 are interaction with DNMT3B; it reads SEVSSSPRIT…TSRERVAGLL (68 aa). Phosphoserine is present on residues Ser-152 and Ser-154. At Lys-160 the chain carries N6-acetyllysine. The interval 163–174 is interaction with PCNA; that stretch reads RQTTITSHFPRG. The span at 163–174 shows a compositional bias: low complexity; sequence RQTTITSHFPRG. Position 166 is a phosphothreonine (Thr-166). The Nuclear localization signal motif lies at 177–204; the sequence is KRKPEEEPEKVKSDDSVDEEKDQEEKRR. Composition is skewed to basic and acidic residues over residues 178 to 191, 199 to 212, 220 to 265, 279 to 311, and 319 to 328; these read RKPE…KSDD, QEEK…RERV, EPGR…RDVR, KDEK…QVSD, and EEKRRRTTYR. Lys-188 carries the post-translational modification N6-acetyllysine. Lys-257 bears the N6-acetyllysine; alternate mark. Lys-257 participates in a covalent cross-link: Glycyl lysine isopeptide (Lys-Gly) (interchain with G-Cter in SUMO2); alternate. A Phosphoserine modification is found at Ser-310. The segment at 329-548 is DNA replication foci-targeting sequence; that stretch reads ELTEKKMTRT…NLNRFTEDSL (220 aa). The Zn(2+) site is built by Cys-351 and Cys-354. 2 positions are modified to phosphoserine: Ser-392 and Ser-396. Zn(2+) is bound by residues Cys-412 and His-416. Ser-507 and Ser-547 each carry phosphoserine. Residues 594–614 are disordered; the sequence is RAERRQTIRQPAKEKDKGPTK. The segment at 643-689 adopts a CXXC-type zinc-finger fold; sequence NAFKRRRCGVCEICQQPECGKCKACKDMVKFGGSGRSKQACQKRRCP. Zn(2+) is bound by residues Cys-650, Cys-653, Cys-656, Cys-661, Cys-664, Cys-667, Cys-683, and Cys-688. Residues 690–751 are autoinhibitory linker; sequence NMAMKEADDD…SYYKKVCIDS (62 aa). The disordered stretch occupies residues 695 to 726; the sequence is EADDDEEVDDNIPEMPSPKKMHQGKKKKQNKN. The span at 696-706 shows a compositional bias: acidic residues; that stretch reads ADDDEEVDDNI. A Phosphoserine modification is found at Ser-711. The segment covering 713–725 has biased composition (basic residues); sequence KKMHQGKKKKQNK. Position 729 is a phosphoserine (Ser-729). Lys-746 is subject to N6-acetyllysine. The 126-residue stretch at 752 to 877 folds into the BAH 1 domain; sequence ETLEVGDCVS…QDYARFESPP (126 aa). Phosphoserine is present on Ser-875. An N6-acetyllysine mark is found at Lys-888, Lys-954, Lys-958, Lys-972, and Lys-1051. The BAH 2 domain occupies 969–1097; that stretch reads HYRKYSDYIK…AKSKSFEDPP (129 aa). Residues 1091-1126 form a disordered region; it reads KSFEDPPNHARSTGNKGKGKGKGKNRTKSQTCEPSE. A run of 4 repeats spans residues 1106–1107, 1108–1109, 1110–1111, and 1112–1113. The 5 X 2 AA tandem repeats of K-G stretch occupies residues 1106–1115; sequence KGKGKGKGKN. Positions 1107 to 1117 are enriched in basic residues; sequence GKGKGKGKNRT. N6-acetyllysine occurs at positions 1108, 1110, 1112, 1114, and 1118. The stretch at 1114–1115 is one 5; approximate repeat; the sequence is KN. The segment at 1118–1611 is interaction with the PRC2/EED-EZH2 complex; sequence KSQTCEPSEL…AKIKEEAAKD (494 aa). Positions 1136 to 1595 constitute an SAM-dependent MTase C5-type domain; the sequence is LRTLDVFSGC…LEIKRCMLAK (460 aa). Residues 1136 to 1611 are catalytic; that stretch reads LRTLDVFSGC…AKIKEEAAKD (476 aa). S-adenosyl-L-methionine is bound by residues Ser-1143, 1147-1148, 1165-1166, 1187-1188, and Cys-1188; these read GL, EM, and DC. Residue Cys-1223 is part of the active site. N6-acetyllysine occurs at positions 1346 and 1412. The S-adenosyl-L-methionine site is built by Asn-1574 and Val-1576. Residue Lys-1605 forms a Glycyl lysine isopeptide (Lys-Gly) (interchain with G-Cter in SUMO2) linkage.

The protein belongs to the class I-like SAM-binding methyltransferase superfamily. C5-methyltransferase family. In terms of assembly, homodimer. Forms a stable complex with E2F1, BB1 and HDAC1. Forms a complex with DMAP1 and HDAC2, with direct interaction. Interacts with the PRC2/EED-EZH2 complex. Probably part of a corepressor complex containing ZNF304, TRIM28, SETDB1 and DNMT1. Interacts with UHRF1; promoting its recruitment to hemimethylated DNA. Interacts with USP7, promoting its deubiquitination. Interacts with PCNA. Interacts with MBD2 and MBD3. Interacts with DNMT3A and DNMT3B. Interacts with UBC9. Interacts with CSNK1D. Interacts with HDAC1. Interacts with BAZ2A/TIP5. Interacts with SIRT7. Interacts with ZNF263; recruited to the SIX3 promoter along with other proteins involved in chromatin modification and transcriptional corepression where it contributes to transcriptional repression. Interacts with L3MBTL3 and DCAF5; the interaction requires DNMT1 methylation at Lys-142 and is necessary to target DNMT1 for ubiquitination by the CRL4-DCAF5 E3 ubiquitin ligase complex and proteasomal degradation. Interacts with PHF20L1; the interaction requires DNMT1 methylation at Lys-142 and protects DNMT1 from ubiquitination and proteasomal degradation. Sumoylated; sumoylation increases activity. In terms of processing, acetylation on multiple lysines, mainly by KAT2B/PCAF, regulates cell cycle G(2)/M transition. Deacetylation of Lys-1346 and Lys-1412 by SIRT1 increases methyltransferase activity. Post-translationally, phosphorylation of Ser-154 by CDKs is important for enzymatic activity and protein stability. Phosphorylation of Ser-143 by AKT1 prevents methylation by SETD7 thereby increasing DNMT1 stability. Methylation at Lys-142 by SETD7 is necessary for the regulation of DNMT1 proteasomal degradation. In terms of processing, ubiquitinated by UHRF1; interaction with USP7 counteracts ubiquitination by UHRF1 by promoting deubiquitination and preventing degradation by the proteasome.

It is found in the nucleus. It catalyses the reaction a 2'-deoxycytidine in DNA + S-adenosyl-L-methionine = a 5-methyl-2'-deoxycytidine in DNA + S-adenosyl-L-homocysteine + H(+). In terms of biological role, methylates CpG residues. Preferentially methylates hemimethylated DNA. Associates with DNA replication sites in S phase maintaining the methylation pattern in the newly synthesized strand, that is essential for epigenetic inheritance. Associates with chromatin during G2 and M phases to maintain DNA methylation independently of replication. It is responsible for maintaining methylation patterns established in development. DNA methylation is coordinated with methylation of histones. Mediates transcriptional repression by direct binding to HDAC2. In association with DNMT3B and via the recruitment of CTCFL/BORIS, involved in activation of BAG1 gene expression by modulating dimethylation of promoter histone H3 at H3K4 and H3K9. Probably forms a corepressor complex required for activated KRAS-mediated promoter hypermethylation and transcriptional silencing of tumor suppressor genes (TSGs) or other tumor-related genes in colorectal cancer (CRC) cells. Also required to maintain a transcriptionally repressive state of genes in undifferentiated embryonic stem cells (ESCs). Associates at promoter regions of tumor suppressor genes (TSGs) leading to their gene silencing. Promotes tumor growth. The polypeptide is DNA (cytosine-5)-methyltransferase 1 (DNMT1) (Bos taurus (Bovine)).